The sequence spans 128 residues: Large ribosomal subunit protein bL17 (128 aa).

It belongs to the bacterial ribosomal protein bL17 family. As to quaternary structure, part of the 50S ribosomal subunit. Contacts protein L32.

The polypeptide is Large ribosomal subunit protein bL17 (Streptococcus equi subsp. zooepidemicus (strain H70)).